A 403-amino-acid chain; its full sequence is MKTIDELLAEGVDGKRVFVRADLNVPLADGLITDDGRIRAVLPTVKALAEAGAKVVVASHLGRPKGAPDPAFSLLPAAERLGELLGAPVAFAQDTVGPAAHDAVNGLQPGQVAVIENLRFNAGETSKDDAERGAFADRLAALADIYVGDGFGAVHRKHASVYDLPARLPHYAGYLIATEVNVLKKLTEDVKRPYVVALGGAKVSDKLAVIDQLLGKADRLLIGGGMAYTFLKAKGYEVGISLLQEDQIPTVKEYMERAEKNGVELVLPVDVLVSTEFPDLKTKAPANPTTVAADAIPADQEGLDIGPETRKLYASKLADAATVFWNGPMGVFEHPDYAEGTKAVAQALVDSQAFTVVGGGDSAAAVRILGFDETAFGHISTGGGASLEYLEGKTLPGLAALED.

Substrate is bound by residues 22-24, R37, 60-63, R119, and R156; these read DLN and HLGR. Residues K206, G302, E333, and 359 to 362 each bind ATP; that span reads GGDS.

Belongs to the phosphoglycerate kinase family. As to quaternary structure, monomer.

Its subcellular location is the cytoplasm. The catalysed reaction is (2R)-3-phosphoglycerate + ATP = (2R)-3-phospho-glyceroyl phosphate + ADP. It functions in the pathway carbohydrate degradation; glycolysis; pyruvate from D-glyceraldehyde 3-phosphate: step 2/5. This Streptomyces avermitilis (strain ATCC 31267 / DSM 46492 / JCM 5070 / NBRC 14893 / NCIMB 12804 / NRRL 8165 / MA-4680) protein is Phosphoglycerate kinase.